A 565-amino-acid polypeptide reads, in one-letter code: FACT complex subunit ctc-1 (565 aa).

Disordered stretches follow at residues 151–173 (GNDG…ASAG) and 477–565 (LGDD…KKTA). Gly residues predominate over residues 152–165 (NDGGKSNGHSGTGG). Acidic residues-rich tracts occupy residues 478 to 489 (GDDDMASSDEEA), 500 to 522 (DEDE…AEEY), and 532 to 553 (GSEE…DDDE).

This sequence belongs to the SSRP1 family. As to quaternary structure, forms a stable heterodimer with ctc-2/spt16. The dimer of ctc-1 and ctc-2 weakly associates with multiple molecules of nhp-1/nhp6 to form the FACT complex.

Its subcellular location is the nucleus. The protein localises to the chromosome. Component of the FACT complex, a general chromatin factor that acts to reorganize nucleosomes. The FACT complex is involved in multiple processes that require DNA as a template such as mRNA elongation, DNA replication and DNA repair. During transcription elongation the FACT complex acts as a histone chaperone that both destabilizes and restores nucleosomal structure. It facilitates the passage of RNA polymerase II and transcription by promoting the dissociation of one histone H2A-H2B dimer from the nucleosome, then subsequently promotes the reestablishment of the nucleosome following the passage of RNA polymerase II. This chain is FACT complex subunit ctc-1 (ctc-1), found in Neurospora crassa (strain ATCC 24698 / 74-OR23-1A / CBS 708.71 / DSM 1257 / FGSC 987).